Consider the following 333-residue polypeptide: Ketol-acid reductoisomerase (NADP(+)) (333 aa).

In terms of domain architecture, KARI N-terminal Rossmann spans 2-182 (AKIYYDEDAS…GATRAGVIET (181 aa)). NADP(+) contacts are provided by residues 25–28 (YGSQ), S51, S53, and 83–86 (DTVQ). Residue H108 is part of the active site. G134 provides a ligand contact to NADP(+). One can recognise a KARI C-terminal knotted domain in the interval 183-327 (TFKEETETDL…EELRKMMPWL (145 aa)). Mg(2+)-binding residues include D191, E195, E227, and E231. Substrate is bound at residue S252.

This sequence belongs to the ketol-acid reductoisomerase family. The cofactor is Mg(2+).

The catalysed reaction is (2R)-2,3-dihydroxy-3-methylbutanoate + NADP(+) = (2S)-2-acetolactate + NADPH + H(+). It carries out the reaction (2R,3R)-2,3-dihydroxy-3-methylpentanoate + NADP(+) = (S)-2-ethyl-2-hydroxy-3-oxobutanoate + NADPH + H(+). It participates in amino-acid biosynthesis; L-isoleucine biosynthesis; L-isoleucine from 2-oxobutanoate: step 2/4. It functions in the pathway amino-acid biosynthesis; L-valine biosynthesis; L-valine from pyruvate: step 2/4. In terms of biological role, involved in the biosynthesis of branched-chain amino acids (BCAA). Catalyzes an alkyl-migration followed by a ketol-acid reduction of (S)-2-acetolactate (S2AL) to yield (R)-2,3-dihydroxy-isovalerate. In the isomerase reaction, S2AL is rearranged via a Mg-dependent methyl migration to produce 3-hydroxy-3-methyl-2-ketobutyrate (HMKB). In the reductase reaction, this 2-ketoacid undergoes a metal-dependent reduction by NADPH to yield (R)-2,3-dihydroxy-isovalerate. The sequence is that of Ketol-acid reductoisomerase (NADP(+)) from Aquifex aeolicus (strain VF5).